Here is a 76-residue protein sequence, read N- to C-terminus: Acyl carrier protein (76 aa).

Positions 1–76 constitute a Carrier domain; that stretch reads MATFDDVKDV…AAIDYIESKQ (76 aa). At Ser-36 the chain carries O-(pantetheine 4'-phosphoryl)serine.

Belongs to the acyl carrier protein (ACP) family. Post-translationally, 4'-phosphopantetheine is transferred from CoA to a specific serine of apo-ACP by AcpS. This modification is essential for activity because fatty acids are bound in thioester linkage to the sulfhydryl of the prosthetic group.

The protein resides in the cytoplasm. It functions in the pathway lipid metabolism; fatty acid biosynthesis. Its function is as follows. Carrier of the growing fatty acid chain in fatty acid biosynthesis. The sequence is that of Acyl carrier protein from Deinococcus deserti (strain DSM 17065 / CIP 109153 / LMG 22923 / VCD115).